The chain runs to 332 residues: Malate dehydrogenase, cytoplasmic (332 aa).

Residues 16–17 (QI), Asp43, and Gly90 each bind NAD(+). Residue Arg99 coordinates oxaloacetate. Residues Gln113 and Asn132 each contribute to the NAD(+) site. Oxaloacetate is bound by residues Asn132, Arg163, His188, and Ser243. The Proton acceptor role is filled by His188.

Belongs to the LDH/MDH superfamily. MDH type 2 family. In terms of assembly, homodimer.

It localises to the cytoplasm. The catalysed reaction is (S)-malate + NAD(+) = oxaloacetate + NADH + H(+). This is Malate dehydrogenase, cytoplasmic (CMDH) from Medicago sativa (Alfalfa).